A 295-amino-acid chain; its full sequence is Sulfotransferase 1E1 (295 aa).

A 3'-phosphoadenylyl sulfate-binding site is contributed by 48-53; it reads KSGTTW. Residue 106-108 coordinates substrate; it reads KSH. His108 serves as the catalytic Proton acceptor. 3'-phosphoadenylyl sulfate is bound by residues Arg130, Ser138, and Tyr193. A phosphoserine; by PKA mark is found at Ser216 and Ser228. Residues 227-232 and 257-259 each bind 3'-phosphoadenylyl sulfate; these read TSFQEM and RKG.

This sequence belongs to the sulfotransferase 1 family. Homodimer.

The protein localises to the cytoplasm. It is found in the cytosol. It carries out the reaction estrone + 3'-phosphoadenylyl sulfate = estrone 3-sulfate + adenosine 3',5'-bisphosphate + H(+). The catalysed reaction is (24S)-hydroxycholesterol + 3'-phosphoadenylyl sulfate = (24S)-hydroxycholesterol 3-sulfate + adenosine 3',5'-bisphosphate + H(+). The enzyme catalyses 17beta-estradiol + 3'-phosphoadenylyl sulfate = 17beta-estradiol 3-sulfate + adenosine 3',5'-bisphosphate + H(+). It catalyses the reaction 3beta-hydroxyandrost-5-en-17-one + 3'-phosphoadenylyl sulfate = dehydroepiandrosterone 3-sulfate + adenosine 3',5'-bisphosphate + H(+). It carries out the reaction 4-ethylphenol + 3'-phosphoadenylyl sulfate = 4-ethylphenyl sulfate + adenosine 3',5'-bisphosphate + H(+). Its activity is regulated as follows. Inhibited by estradiol. Functionally, sulfotransferase that utilizes 3'-phospho-5'-adenylyl sulfate (PAPS) as sulfonate donor to catalyze the sulfate conjugation of estradiol and estrone. Is a key enzyme in estrogen homeostasis, the sulfation of estrogens leads to their inactivation. Also sulfates dehydroepiandrosterone (DHEA), pregnenolone, (24S)-hydroxycholesterol and xenobiotic compounds like ethinylestradiol, equalenin, diethyl stilbesterol and 1-naphthol at significantly lower efficiency. Does not sulfonate cortisol, testosterone and dopamine. May play a role in gut microbiota-host metabolic interaction. O-sulfonates 4-ethylphenol (4-EP), a dietary tyrosine-derived metabolite produced by gut bacteria. The product 4-EPS crosses the blood-brain barrier and may negatively regulate oligodendrocyte maturation and myelination, affecting the functional connectivity of different brain regions associated with the limbic system. The polypeptide is Sulfotransferase 1E1 (SULT1E1) (Bos taurus (Bovine)).